A 2344-amino-acid polypeptide reads, in one-letter code: Mucin-4 (2344 aa).

A signal peptide spans 1 to 30 (MRGPHGVSWRVPWLCLSCLCSCLLLLPVNT). The span at 32–46 (TTSAPKTSTALPSST) shows a compositional bias: low complexity. 5 disordered regions span residues 32–760 (TTSA…QGSI), 773–1036 (QKMS…TTST), 1072–1130 (VPSL…TPSV), 1171–1197 (STVA…MGAS), and 1233–1269 (SGLT…TVPP). A compositionally biased stretch (polar residues) spans 47-100 (NPSQMTSQVSNPTASSYRMTKNTGQASPMVTSSSITTLPQSQHTGSMKTTRNPQ). The tract at residues 81–1006 (ITTLPQSQHT…VSTLVTSTQE (926 aa)) is variable number of tandem repeats (VNTR). Composition is skewed to low complexity over residues 101 to 116 (TTGT…ASSS) and 123 to 137 (TTSQ…TTTS). O-linked (GalNAc...) threonine glycosylation occurs at T133. Positions 142–225 (ESSSPPSTSV…GGMKTTRNPQ (84 aa)) are enriched in polar residues. A compositionally biased stretch (low complexity) spans 226 to 273 (TTGTTEVTTTLSASSSDHPTSSPESTPGNTAPRTTETSTTTTTKVLMT). Over residues 274–305 (SLQQKLPTGSTLGTSTQELTTLPQSQHTGIMK) the composition is skewed to polar residues. Low complexity-rich tracts occupy residues 306–322 (TTSR…TTRT) and 335–349 (TSSQ…TTTS). Over residues 373–436 (SGDTGHTMAV…GMKTTRNPQR (64 aa)) the composition is skewed to polar residues. 2 O-linked (GalNAc...) threonine glycosylation sites follow: T391 and T392. A compositionally biased stretch (low complexity) spans 437-446 (TTPTEVTTST). The span at 447–468 (LSASSSDQVQVETTSRATLSPD) shows a compositional bias: polar residues. Residues 469–492 (TTTTSHAPSVSSSSPSPPSTEGTS) are compositionally biased toward low complexity. The O-linked (GalNAc...) threonine glycan is linked to T470. O-linked (GalNAc...) serine glycosylation occurs at S479. The span at 493 to 509 (VDTGLTTAVTTQDSTPA) shows a compositional bias: polar residues. Residues 510 to 546 (TTQGSLTSSSQTLSTVSPLSTSTQETSTQELTSSQSQ) show a composition bias toward low complexity. Residues 547 to 580 (HTGSMKTTHNPQTTRNTEVTTTLSASSSDQVQVE) show a composition bias toward polar residues. The span at 581–594 (TTSQTTLSDATTTS) shows a compositional bias: low complexity. Residues 599-682 (ESSSPPSTSD…GGMKTTRNPQ (84 aa)) show a composition bias toward polar residues. Low complexity-rich tracts occupy residues 683–698 (TTGT…ASSS) and 705–719 (TSSQ…TTTS). Composition is skewed to polar residues over residues 724-760 (ESSS…QGSI) and 773-807 (QKMS…SSRP). Positions 808–828 (QTTSVTSTLSSSPSGSTPVQT) are enriched in low complexity. A compositionally biased stretch (polar residues) spans 829–868 (RSVTSSSDERTNPTSSGVSNTSPATTEVLTPTSSPESTPG). Over residues 869 to 915 (NTAPRTTETSTTTTTKVLMTSLQQKLPTGSTLGTSTPTEVTTTLSAS) the composition is skewed to low complexity. Positions 916-994 (SSDQVQVETT…ISVTPSTQKM (79 aa)) are enriched in polar residues. Low complexity predominate over residues 995-1015 (STVSTLVTSTQELTSSQSQRT). Positions 1016-1026 (GSMGTSSKPQA) are enriched in polar residues. A compositionally biased stretch (low complexity) spans 1027 to 1036 (TTPTEVTTST). The span at 1072-1083 (VPSLMHSSKPQA) shows a compositional bias: polar residues. The span at 1084–1096 (TTPTEVTTSTLSS) shows a compositional bias: low complexity. The span at 1097–1116 (FSRGSTQTQTVSWETSSSGK) shows a compositional bias: polar residues. Composition is skewed to low complexity over residues 1118–1130 (TAPS…TPSV), 1175–1188 (HRQS…HSQS), and 1233–1267 (SGLT…RSTV). The 161-residue stretch at 1332 to 1492 (GHSGVMLISL…TGYTGRCGPT (161 aa)) folds into the NIDO domain. The segment at 1574-1597 (GRHRTGLAAGTTSPLSASSTSSGG) is disordered. Low complexity predominate over residues 1580–1597 (LAAGTTSPLSASSTSSGG). The 196-residue stretch at 1609–1804 (RPAWTFGDPH…HYGMTSETNG (196 aa)) folds into the VWFD domain. 19 N-linked (GlcNAc...) asparagine glycosylation sites follow: N1644, N1660, N1672, N1689, N1698, N1704, N1715, N1724, N1759, N1780, N1787, N1829, N1874, N1926, N1951, N1974, N1981, N2029, and N2048. The EGF-like 1 domain maps to 2047-2086 (QNHSCPVNYCYNHGHCDISGPPDCQPTCTCAPAFTGNRCF). 3 disulfides stabilise this stretch: C2051–C2062, C2056–C2074, and C2076–C2085. N-linked (GlcNAc...) asparagine glycosylation is found at N2114 and N2121. A helical transmembrane segment spans residues 2173–2193 (GPLIHYLNNQLISAVMEAFLL). N-linked (GlcNAc...) asparagine glycosylation occurs at N2227. The region spanning 2256-2295 (VSPCSEGYCHNGGQCKHLPDGPQCTCATFSIYTSWGERCE) is the EGF-like 2 domain. 3 cysteine pairs are disulfide-bonded: C2259–C2270, C2264–C2279, and C2281–C2294. A helical membrane pass occupies residues 2301–2321 (LGAFFGILFGALGALLLLAIL).

In terms of assembly, a heterodimeric complex, composed of a mucin-4 alpha chain and a cysteine-rich transmembrane mucin-4 beta chain. Mucin-4 beta chain interacts with ERBB2 via the EGF-like domain 1. In nonpolarized cells, associates with ERBB2 and ERBB3. Post-translationally, proteolytically cleaved into 2 subunits, mucin-4 alpha chain and mucin-4 beta chain. Mucin-4 alpha subunit is highly O-glycosylated. In terms of processing, mucin-4 beta subunit is predominantly N-glycosylated. As to expression, expression is developmentally regulated in the mammary gland, dramatically increases in the lactating gland compared with the virgin mammary gland, while decreasing again during mammary gland involution. Expressed in 13762 ascites cells. Overexpressed in some aggressive mammary tumors. Overexpression seems to block cell-cell and cell-matrix interactions to protect tumor cells from immune surveillance, and to promote metastasis.

It localises to the cell membrane. Its subcellular location is the secreted. Membrane-bound mucin, a family of highly glycosylated proteins that constitute the major component of the mucus, the slimy and viscous secretion covering epithelial surfaces. These glycoproteins play important roles in the protection of the epithelium and are implicated in epithelial renewal and differentiation. Regulates cellular behavior through both anti-adhesive effects on cell-cell and cell-extracellular matrix interactions and its ability to act as an intramembrane ligand for ERBB2. Plays an important role in proliferation and differentiation of epithelial cells by inducing specific phosphorylation of ERBB2. In polarized epithelial cells, segregates ERBB2 and other ERBB receptors and prevents ERBB2 from acting as a coreceptor. The interaction with ERBB2 leads to enhanced expression of CDKN1B. The formation of a MUC4-ERBB2-ERBB3-NRG1 complex leads to down-regulation of CDKN1B, resulting in repression of apoptosis and stimulation of proliferation. Its ability to promote tumor growth may be mainly due to repression of apoptosis as opposed to proliferation. In Rattus norvegicus (Rat), this protein is Mucin-4 (Muc4).